The following is a 254-amino-acid chain: 5-keto-D-gluconate 5-reductase (254 aa).

13-37 (LITGSAQGIGFLLATGLGKYGAQII) provides a ligand contact to NADP(+). Ser-145 is a substrate binding site. Tyr-158 acts as the Proton acceptor in catalysis.

The protein belongs to the short-chain dehydrogenases/reductases (SDR) family.

It catalyses the reaction D-gluconate + NAD(+) = 5-dehydro-D-gluconate + NADH + H(+). It carries out the reaction D-gluconate + NADP(+) = 5-dehydro-D-gluconate + NADPH + H(+). It participates in carbohydrate acid metabolism; L-idonate degradation. Catalyzes the reduction of 5-keto-D-gluconate to D-gluconate, using either NADH or NADPH. Is likely involved in an L-idonate degradation pathway that allows E.coli to utilize L-idonate as the sole carbon and energy source. Is also able to catalyze the reverse reaction in vitro, but the D-gluconate oxidation by the enzyme can only proceed with NAD. This is 5-keto-D-gluconate 5-reductase from Escherichia coli O6:H1 (strain CFT073 / ATCC 700928 / UPEC).